Here is a 284-residue protein sequence, read N- to C-terminus: 4-diphosphocytidyl-2-C-methyl-D-erythritol kinase (284 aa).

Residue Lys-14 is part of the active site. Position 98–108 (98–108 (PMGGGLGGGSS)) interacts with ATP. Residue Asp-140 is part of the active site.

It belongs to the GHMP kinase family. IspE subfamily.

The catalysed reaction is 4-CDP-2-C-methyl-D-erythritol + ATP = 4-CDP-2-C-methyl-D-erythritol 2-phosphate + ADP + H(+). The protein operates within isoprenoid biosynthesis; isopentenyl diphosphate biosynthesis via DXP pathway; isopentenyl diphosphate from 1-deoxy-D-xylulose 5-phosphate: step 3/6. Its function is as follows. Catalyzes the phosphorylation of the position 2 hydroxy group of 4-diphosphocytidyl-2C-methyl-D-erythritol. The chain is 4-diphosphocytidyl-2-C-methyl-D-erythritol kinase from Shewanella piezotolerans (strain WP3 / JCM 13877).